The following is a 645-amino-acid chain: Bifurcating [FeFe] hydrogenase alpha subunit (645 aa).

One can recognise a 2Fe-2S ferredoxin-type domain in the interval 1 to 76 (MKIYVDGREV…GMKVKTNTPE (76 aa)). The [2Fe-2S] cluster site is built by Cys-34, Cys-45, Cys-48, and Cys-60. The 4Fe-4S His(Cys)3-ligated-type domain occupies 76 to 115 (EIYEMRRNILELILATHNRDCTTCDRNGSCKLQKYAEDFG). Positions 92, 96, 99, 105, 143, 146, 149, 153, 186, 189, 192, 196, 295, 350, 482, and 486 each coordinate [4Fe-4S] cluster. 2 consecutive 4Fe-4S ferredoxin-type domains span residues 133 to 164 (SAPV…VIEF) and 178 to 206 (DTPL…IRND). Position 486 (Cys-486) interacts with Fe(2+). The [2Fe-2S] cluster site is built by Cys-575, Cys-580, Cys-612, and Cys-616.

Heterotrimer composed of HydA (alpha subunit), HydB (beta subunit) and HydC (gamma subunit). Near neutral and acidic pH conditions favor oligomerization of the heterotrimeric holoenzyme. [2Fe-2S] cluster is required as a cofactor. It depends on [4Fe-4S] cluster as a cofactor. Requires Fe(2+) as cofactor.

The protein localises to the cytoplasm. It catalyses the reaction 2 H2 + 2 oxidized [2Fe-2S]-[ferredoxin] + NAD(+) = 2 reduced [2Fe-2S]-[ferredoxin] + NADH + 3 H(+). In terms of biological role, catalyzes the oxidation of the physiological electron carriers NADH and reduced ferredoxin, coupled to the production of H(2). Acts as a bifurcating [FeFe] hydrogenase, which uses the exergonic oxidation of reduced ferredoxin to drive the unfavorable oxidation of NADH to produce H(2). The alpha subunit contains the catalytic H-cluster. The sequence is that of Bifurcating [FeFe] hydrogenase alpha subunit from Thermotoga maritima (strain ATCC 43589 / DSM 3109 / JCM 10099 / NBRC 100826 / MSB8).